The following is a 289-amino-acid chain: Nucleotide-binding protein COPRO5265_0725 (289 aa).

Residue 9–16 coordinates ATP; that stretch reads GLSGAGKS. A GTP-binding site is contributed by 59–62; it reads DSRS.

It belongs to the RapZ-like family.

Functionally, displays ATPase and GTPase activities. This chain is Nucleotide-binding protein COPRO5265_0725, found in Coprothermobacter proteolyticus (strain ATCC 35245 / DSM 5265 / OCM 4 / BT).